The following is a 351-amino-acid chain: Phosphoribosylformylglycinamidine cyclo-ligase (351 aa).

Belongs to the AIR synthase family.

The protein localises to the cytoplasm. It catalyses the reaction 2-formamido-N(1)-(5-O-phospho-beta-D-ribosyl)acetamidine + ATP = 5-amino-1-(5-phospho-beta-D-ribosyl)imidazole + ADP + phosphate + H(+). It participates in purine metabolism; IMP biosynthesis via de novo pathway; 5-amino-1-(5-phospho-D-ribosyl)imidazole from N(2)-formyl-N(1)-(5-phospho-D-ribosyl)glycinamide: step 2/2. The polypeptide is Phosphoribosylformylglycinamidine cyclo-ligase (Burkholderia ambifaria (strain ATCC BAA-244 / DSM 16087 / CCUG 44356 / LMG 19182 / AMMD) (Burkholderia cepacia (strain AMMD))).